The following is a 343-amino-acid chain: MLAARLSRPLSQLPGKALSVRDRENGTRHTLLFYPASFSPDTRRTYASQADAASGKAILITGCDSGFGFSLAKHLHSKGFLVFAGCLMKDKGDAGVKELDSLKSDRLRTIQLNVCNSEEVEKAVETIRSGLKDPEKGMWGLVNNAGISTFGEVEFTSMETYKEVAEVNLWGTVRTTKSFLPLLRRAKGRVVNISSMLGRMANPARSPYCITKFGIEAFSDCLRYEMHPLGVKVSVVEPGNFIAATSLYSPERIQAIAKKMWDDLPEVVRKDYGRKYFDEKIAKMETYCNSGSTDTSSVINAVTHALTAATPYTRYHPMDYYWWLRMQIMTHFPGAISDKIYIH.

Residues 1–46 constitute a mitochondrion transit peptide; that stretch reads MLAARLSRPLSQLPGKALSVRDRENGTRHTLLFYPASFSPDTRRTY. Residue 60–84 coordinates NAD(+); it reads ITGCDSGFGFSLAKHLHSKGFLVFA. Residues Lys-73 and Lys-97 each carry the N6-acetyllysine modification. Lys-103 bears the N6-acetyllysine; alternate mark. Lys-103 carries the post-translational modification N6-succinyllysine; alternate. N6-acetyllysine occurs at positions 132 and 177. Met-196 contributes to the substrate binding site. Cys-209 acts as the Proton acceptor in catalysis. Lys-212 bears the N6-acetyllysine mark. Ser-219 carries O-linked (GlcNAc) serine glycosylation. Ser-246 is subject to Phosphoserine. Lys-258 carries the N6-acetyllysine modification. Lys-259 bears the N6-acetyllysine; alternate mark. Lys-259 carries the post-translational modification N6-succinyllysine; alternate. The residue at position 280 (Lys-280) is an N6-acetyllysine.

The protein belongs to the short-chain dehydrogenases/reductases (SDR) family. As to quaternary structure, homotetramer. Post-translationally, acetylation of Lys-132 is observed in liver mitochondria from fasted mice but not from fed mice.

Its subcellular location is the mitochondrion inner membrane. The protein resides in the mitochondrion matrix. It carries out the reaction (R)-3-hydroxybutanoate + NAD(+) = acetoacetate + NADH + H(+). Its activity is regulated as follows. Requires phosphatidylcholine as an allosteric activator for enzymatic activity. This Mus musculus (Mouse) protein is D-beta-hydroxybutyrate dehydrogenase, mitochondrial.